A 100-amino-acid chain; its full sequence is Small ribosomal subunit protein bS6 (100 aa).

The protein belongs to the bacterial ribosomal protein bS6 family.

In terms of biological role, binds together with bS18 to 16S ribosomal RNA. This Tropheryma whipplei (strain TW08/27) (Whipple's bacillus) protein is Small ribosomal subunit protein bS6.